A 188-amino-acid chain; its full sequence is Alkyl hydroperoxide reductase C (188 aa).

One can recognise a Thioredoxin domain in the interval 2 to 158 (SLIGTEVQPF…LINKVKAAQY (157 aa)). Cys48 acts as the Cysteine sulfenic acid (-SOH) intermediate in catalysis.

This sequence belongs to the peroxiredoxin family. AhpC/Prx1 subfamily. In terms of assembly, homodimer; disulfide-linked, upon oxidation. 5 homodimers assemble to form a ring-like decamer.

The protein resides in the cytoplasm. The enzyme catalyses a hydroperoxide + NADH + H(+) = an alcohol + NAD(+) + H2O. In terms of biological role, thiol-specific peroxidase that catalyzes the reduction of hydrogen peroxide and organic hydroperoxides to water and alcohols, respectively. Plays a role in cell protection against oxidative stress by detoxifying peroxides. This is Alkyl hydroperoxide reductase C (ahpC) from Amphibacillus xylanus (strain ATCC 51415 / DSM 6626 / JCM 7361 / LMG 17667 / NBRC 15112 / Ep01).